We begin with the raw amino-acid sequence, 247 residues long: Adenosylcobinamide-GDP ribazoletransferase (247 aa).

The next 6 membrane-spanning stretches (helical) occupy residues 31 to 51, 57 to 77, 109 to 129, 136 to 156, 189 to 209, and 218 to 238; these read VVWF…AAAL, PWLG…GLHL, FGVI…HWLL, PALV…TLLL, ITPI…WMWL, and ILGA…GVSL.

The protein belongs to the CobS family. Mg(2+) is required as a cofactor.

Its subcellular location is the cell inner membrane. The catalysed reaction is alpha-ribazole + adenosylcob(III)inamide-GDP = adenosylcob(III)alamin + GMP + H(+). It carries out the reaction alpha-ribazole 5'-phosphate + adenosylcob(III)inamide-GDP = adenosylcob(III)alamin 5'-phosphate + GMP + H(+). It functions in the pathway cofactor biosynthesis; adenosylcobalamin biosynthesis; adenosylcobalamin from cob(II)yrinate a,c-diamide: step 7/7. Joins adenosylcobinamide-GDP and alpha-ribazole to generate adenosylcobalamin (Ado-cobalamin). Also synthesizes adenosylcobalamin 5'-phosphate from adenosylcobinamide-GDP and alpha-ribazole 5'-phosphate. This is Adenosylcobinamide-GDP ribazoletransferase from Thiobacillus denitrificans (strain ATCC 25259 / T1).